Reading from the N-terminus, the 470-residue chain is Glucose-1-phosphate adenylyltransferase large subunit 1 (470 aa).

The protein belongs to the bacterial/plant glucose-1-phosphate adenylyltransferase family. In terms of assembly, heterotetramer. As to expression, prominently expressed in the leaves and a weaker expression is seen in the tubers.

Its subcellular location is the plastid. It is found in the chloroplast. The protein resides in the amyloplast. It catalyses the reaction alpha-D-glucose 1-phosphate + ATP + H(+) = ADP-alpha-D-glucose + diphosphate. It participates in glycan biosynthesis; starch biosynthesis. Activated by 3'phosphoglycerate, inhibited by orthophosphate. Allosteric regulation. Functionally, this protein plays a role in synthesis of starch. It catalyzes the synthesis of the activated glycosyl donor, ADP-glucose from Glc-1-P and ATP. The sequence is that of Glucose-1-phosphate adenylyltransferase large subunit 1 (AGPS1) from Solanum tuberosum (Potato).